The sequence spans 281 residues: Light-independent protochlorophyllide reductase iron-sulfur ATP-binding protein (281 aa).

Residues glycine 10–threonine 15 and lysine 39 contribute to the ATP site. Residue serine 14 participates in Mg(2+) binding. Residues cysteine 95 and cysteine 129 each coordinate [4Fe-4S] cluster. Asparagine 180–arginine 181 provides a ligand contact to ATP.

This sequence belongs to the NifH/BchL/ChlL family. As to quaternary structure, homodimer. Protochlorophyllide reductase is composed of three subunits; ChlL, ChlN and ChlB. [4Fe-4S] cluster serves as cofactor.

It carries out the reaction chlorophyllide a + oxidized 2[4Fe-4S]-[ferredoxin] + 2 ADP + 2 phosphate = protochlorophyllide a + reduced 2[4Fe-4S]-[ferredoxin] + 2 ATP + 2 H2O. The protein operates within porphyrin-containing compound metabolism; chlorophyll biosynthesis (light-independent). Its function is as follows. Component of the dark-operative protochlorophyllide reductase (DPOR) that uses Mg-ATP and reduced ferredoxin to reduce ring D of protochlorophyllide (Pchlide) to form chlorophyllide a (Chlide). This reaction is light-independent. The L component serves as a unique electron donor to the NB-component of the complex, and binds Mg-ATP. This chain is Light-independent protochlorophyllide reductase iron-sulfur ATP-binding protein, found in Thermosynechococcus vestitus (strain NIES-2133 / IAM M-273 / BP-1).